We begin with the raw amino-acid sequence, 205 residues long: Allergen Asp f 15 homolog (205 aa).

This sequence belongs to the cerato-platanin family.

The protein localises to the secreted. This Arthroderma benhamiae (strain ATCC MYA-4681 / CBS 112371) (Trichophyton mentagrophytes) protein is Allergen Asp f 15 homolog.